A 597-amino-acid polypeptide reads, in one-letter code: Elongation factor 4 (597 aa).

In terms of domain architecture, tr-type G spans 2-184 (KHIRNFSIIA…KIVSAIPAPE (183 aa)). GTP-binding positions include 14–19 (DHGKST) and 131–134 (NKID).

It belongs to the TRAFAC class translation factor GTPase superfamily. Classic translation factor GTPase family. LepA subfamily.

It localises to the cell inner membrane. It catalyses the reaction GTP + H2O = GDP + phosphate + H(+). Required for accurate and efficient protein synthesis under certain stress conditions. May act as a fidelity factor of the translation reaction, by catalyzing a one-codon backward translocation of tRNAs on improperly translocated ribosomes. Back-translocation proceeds from a post-translocation (POST) complex to a pre-translocation (PRE) complex, thus giving elongation factor G a second chance to translocate the tRNAs correctly. Binds to ribosomes in a GTP-dependent manner. The polypeptide is Elongation factor 4 (Vibrio vulnificus (strain CMCP6)).